The following is a 181-amino-acid chain: Acireductone dioxygenase (181 aa).

Fe(2+)-binding residues include H97, H99, E103, and H141. Positions 97, 99, 103, and 141 each coordinate Ni(2+).

It belongs to the acireductone dioxygenase (ARD) family. In terms of assembly, monomer. Fe(2+) serves as cofactor. The cofactor is Ni(2+).

It carries out the reaction 1,2-dihydroxy-5-(methylsulfanyl)pent-1-en-3-one + O2 = 3-(methylsulfanyl)propanoate + CO + formate + 2 H(+). It catalyses the reaction 1,2-dihydroxy-5-(methylsulfanyl)pent-1-en-3-one + O2 = 4-methylsulfanyl-2-oxobutanoate + formate + 2 H(+). Its pathway is amino-acid biosynthesis; L-methionine biosynthesis via salvage pathway; L-methionine from S-methyl-5-thio-alpha-D-ribose 1-phosphate: step 5/6. Its function is as follows. Catalyzes 2 different reactions between oxygen and the acireductone 1,2-dihydroxy-3-keto-5-methylthiopentene (DHK-MTPene) depending upon the metal bound in the active site. Fe-containing acireductone dioxygenase (Fe-ARD) produces formate and 2-keto-4-methylthiobutyrate (KMTB), the alpha-ketoacid precursor of methionine in the methionine recycle pathway. Ni-containing acireductone dioxygenase (Ni-ARD) produces methylthiopropionate, carbon monoxide and formate, and does not lie on the methionine recycle pathway. In Pseudomonas fluorescens (strain Pf0-1), this protein is Acireductone dioxygenase.